The chain runs to 380 residues: Genome polyprotein (380 aa).

Disordered stretches follow at residues 54 to 154 (GTVD…TGKI) and 349 to 380 (GNVGETQENTERHTAGDVSRNMHSLLGVQQHH). Residues 67 to 84 (QGTTPPATGSGAKPATSG) are compositionally biased toward low complexity. Gly residues-rich tracts occupy residues 85–99 (AGSGSGTGAGTGVTG) and 106–123 (SGTGTGSGATGGQSGSGS). Over residues 129-140 (NTGSAGTNATGG) the composition is skewed to low complexity.

This sequence belongs to the potyviridae genome polyprotein family. Genome polyprotein of potyviruses undergoes post-translational proteolytic processing by the main proteinase NIa-pro resulting in the production of at least ten individual proteins. The P1 proteinase and the HC-pro cleave only their respective C-termini autocatalytically. 6K1 is essential for proper proteolytic separation of P3 from CI.

It localises to the virion. It carries out the reaction RNA(n) + a ribonucleoside 5'-triphosphate = RNA(n+1) + diphosphate. Functionally, an RNA-dependent RNA polymerase that plays an essential role in the virus replication. Its function is as follows. Involved in aphid transmission, cell-to-cell and systemis movement, encapsidation of the viral RNA and in the regulation of viral RNA amplification. The polypeptide is Genome polyprotein (Sorghum halepense (Johnson grass)).